A 511-amino-acid polypeptide reads, in one-letter code: ADP,ATP carrier protein 4 (511 aa).

12 helical membrane-spanning segments follow: residues 34–54, 71–91, 102–122, 157–177, 192–212, 231–251, 296–316, 330–350, 361–381, 390–410, 453–473, and 476–496; these read VSKF…QNLI, ISFL…AIYV, IFYL…YVIF, FSLF…LLFW, FYPL…QFLE, FHTL…IIAI, LIAT…GPWK, AAFI…FVVL, FTAA…FFAV, LIIA…IGAI, LGKS…PSAS, and SISI…LWAT.

The protein belongs to the ADP/ATP translocase tlc family.

It localises to the cell membrane. Its function is as follows. Provides the rickettsial cell with host ATP in exchange for rickettsial ADP. This is an obligate exchange system. This energy acquiring activity is an important component of rickettsial parasitism. The chain is ADP,ATP carrier protein 4 (tlcD) from Rickettsia felis (strain ATCC VR-1525 / URRWXCal2) (Rickettsia azadi).